The sequence spans 618 residues: Glucose starvation modulator protein 1 (618 aa).

Positions 20 to 48 (CEFCHTKHIQCDVGRPCQNCLKRNIGKFC) form a DNA-binding region, zn(2)-C6 fungal-type. The interval 325–352 (ANANTHPSHNAKLESECDSSSHSDADLE) is disordered. The segment covering 335–352 (AKLESECDSSSHSDADLE) has biased composition (basic and acidic residues). A PAS domain is found at 466 to 538 (LLDLENMAKL…QIFNELLAFG (73 aa)).

The protein belongs to the ERT1/acuK family.

It is found in the nucleus. Its function is as follows. Transcription factor which regulates nonfermentable carbon utilization. Binds specifically to 5'-CGGN(8)CGG-3' and 5'-CGGN(9)CGG-3' sequences in the promoter region. The polypeptide is Glucose starvation modulator protein 1 (GSM1) (Saccharomyces cerevisiae (strain YJM789) (Baker's yeast)).